We begin with the raw amino-acid sequence, 234 residues long: Orotidine 5'-phosphate decarboxylase (234 aa).

Substrate-binding positions include D11, K33, 60 to 69 (DLKFHDIPNT), T120, R181, Q190, G210, and R211. K62 (proton donor) is an active-site residue.

The protein belongs to the OMP decarboxylase family. Type 1 subfamily. In terms of assembly, homodimer.

The catalysed reaction is orotidine 5'-phosphate + H(+) = UMP + CO2. It participates in pyrimidine metabolism; UMP biosynthesis via de novo pathway; UMP from orotate: step 2/2. Catalyzes the decarboxylation of orotidine 5'-monophosphate (OMP) to uridine 5'-monophosphate (UMP). The sequence is that of Orotidine 5'-phosphate decarboxylase from Shewanella sediminis (strain HAW-EB3).